The chain runs to 68 residues: Large ribosomal subunit protein uL29 (68 aa).

The protein belongs to the universal ribosomal protein uL29 family.

The protein is Large ribosomal subunit protein uL29 of Streptococcus uberis (strain ATCC BAA-854 / 0140J).